The primary structure comprises 309 residues: Gamma-hemolysin component A (309 aa).

Residues 1-29 (MIKNKILTATLAVGLIAPLANPFIEISKA) form the signal peptide.

Belongs to the aerolysin family. As to quaternary structure, toxicity requires sequential binding and synergistic association of a class S and a class F component which form heterooligomeric complexes. HlgA (class S) associates with HlgB (class F) thus forming an AB toxin in strains producing both gamma-hemolysins and leukocidins. HlgA and LukF-PV can also form a complex.

It localises to the secreted. Toxin that seems to act by forming pores in the membrane of the cell. Has a hemolytic and a leucotoxic activity. The polypeptide is Gamma-hemolysin component A (hlgA) (Staphylococcus aureus (strain COL)).